Consider the following 356-residue polypeptide: Tetraacyldisaccharide 4'-kinase (356 aa).

Residue 51–58 (GWGGSGKT) participates in ATP binding.

The protein belongs to the LpxK family.

It catalyses the reaction a lipid A disaccharide + ATP = a lipid IVA + ADP + H(+). It functions in the pathway glycolipid biosynthesis; lipid IV(A) biosynthesis; lipid IV(A) from (3R)-3-hydroxytetradecanoyl-[acyl-carrier-protein] and UDP-N-acetyl-alpha-D-glucosamine: step 6/6. Its function is as follows. Transfers the gamma-phosphate of ATP to the 4'-position of a tetraacyldisaccharide 1-phosphate intermediate (termed DS-1-P) to form tetraacyldisaccharide 1,4'-bis-phosphate (lipid IVA). In Oleidesulfovibrio alaskensis (strain ATCC BAA-1058 / DSM 17464 / G20) (Desulfovibrio alaskensis), this protein is Tetraacyldisaccharide 4'-kinase.